Here is a 203-residue protein sequence, read N- to C-terminus: Glycerol-3-phosphate acyltransferase (203 aa).

4 consecutive transmembrane segments (helical) span residues 4-24 (MAVTMTIIAYLLGSISSAVLI), 80-100 (PVLLGVIAIAACLGHMYPLFF), 117-137 (PIGLDLTGMIMATWLLVAILF), and 139-159 (YSSLAALVTVLLAPMYTWMIK).

It belongs to the PlsY family. Probably interacts with PlsX.

The protein resides in the cell inner membrane. The enzyme catalyses an acyl phosphate + sn-glycerol 3-phosphate = a 1-acyl-sn-glycero-3-phosphate + phosphate. It functions in the pathway lipid metabolism; phospholipid metabolism. Catalyzes the transfer of an acyl group from acyl-phosphate (acyl-PO(4)) to glycerol-3-phosphate (G3P) to form lysophosphatidic acid (LPA). This enzyme utilizes acyl-phosphate as fatty acyl donor, but not acyl-CoA or acyl-ACP. The chain is Glycerol-3-phosphate acyltransferase from Vibrio vulnificus (strain YJ016).